The primary structure comprises 202 residues: NADH-quinone oxidoreductase subunit C (202 aa).

Belongs to the complex I 30 kDa subunit family. As to quaternary structure, NDH-1 is composed of 14 different subunits. Subunits NuoB, C, D, E, F, and G constitute the peripheral sector of the complex.

The protein resides in the cell inner membrane. The enzyme catalyses a quinone + NADH + 5 H(+)(in) = a quinol + NAD(+) + 4 H(+)(out). Its function is as follows. NDH-1 shuttles electrons from NADH, via FMN and iron-sulfur (Fe-S) centers, to quinones in the respiratory chain. The immediate electron acceptor for the enzyme in this species is believed to be ubiquinone. Couples the redox reaction to proton translocation (for every two electrons transferred, four hydrogen ions are translocated across the cytoplasmic membrane), and thus conserves the redox energy in a proton gradient. The protein is NADH-quinone oxidoreductase subunit C of Hyphomonas neptunium (strain ATCC 15444).